The following is a 342-amino-acid chain: N-acetyl-gamma-glutamyl-phosphate reductase (342 aa).

Cys146 is an active-site residue.

Belongs to the NAGSA dehydrogenase family. Type 1 subfamily.

The protein resides in the cytoplasm. The enzyme catalyses N-acetyl-L-glutamate 5-semialdehyde + phosphate + NADP(+) = N-acetyl-L-glutamyl 5-phosphate + NADPH + H(+). It participates in amino-acid biosynthesis; L-arginine biosynthesis; N(2)-acetyl-L-ornithine from L-glutamate: step 3/4. Its function is as follows. Catalyzes the NADPH-dependent reduction of N-acetyl-5-glutamyl phosphate to yield N-acetyl-L-glutamate 5-semialdehyde. This is N-acetyl-gamma-glutamyl-phosphate reductase from Streptomyces avermitilis (strain ATCC 31267 / DSM 46492 / JCM 5070 / NBRC 14893 / NCIMB 12804 / NRRL 8165 / MA-4680).